A 163-amino-acid polypeptide reads, in one-letter code: Neurotrophin-3 (163 aa).

The N-terminal stretch at 1 to 3 (IQS) is a signal peptide. The propeptide occupies 4–119 (TSMDQGILTE…VLNRTSRRKR (116 aa)). A glycan (N-linked (GlcNAc...) asparagine) is linked at N112.

The protein belongs to the NGF-beta family.

It localises to the secreted. Its function is as follows. Seems to promote the survival of visceral and proprioceptive sensory neurons. This is Neurotrophin-3 (NTF3) from Eryx conicus (Rough-scaled sand boa).